Reading from the N-terminus, the 723-residue chain is ESX-1 secretion-associated protein EspK (723 aa).

Disordered regions lie at residues 175 to 360 (DLLQ…TPAA) and 393 to 451 (SGAG…GTPV). Low complexity predominate over residues 200–209 (TPGTPITPGT). The span at 210 to 229 (PITPIPGAPVTPITPTPGTP) shows a compositional bias: pro residues. Positions 230–249 (VTPVTPGKPVTPVTPVKPGT) are enriched in low complexity. Composition is skewed to pro residues over residues 250–265 (PGEPTPITPVTPPVAP) and 274–308 (PVTPAPAPHPQPAPAPAPSPGPQPVTPATPGPSGP). 3 stretches are compositionally biased toward low complexity: residues 309–319 (ATPGTPGGEPA), 393–404 (SGAGSHAATGRA), and 412–426 (AAAPSTRAASARTAP). The span at 432-444 (STDHIDKPDRSES) shows a compositional bias: basic and acidic residues.

It localises to the cytoplasm. May act as a chaperone that facilitates EspB secretion through an interaction with EccCb1. This is ESX-1 secretion-associated protein EspK from Mycobacterium tuberculosis (strain CDC 1551 / Oshkosh).